The sequence spans 765 residues: 5-methyltetrahydropteroyltriglutamate--homocysteine methyltransferase (765 aa).

5-methyltetrahydropteroyltri-L-glutamate contacts are provided by residues 18–21 and lysine 114; that span reads REWK. L-homocysteine contacts are provided by residues 437 to 439 and glutamate 490; that span reads IGS. Residues 437–439 and glutamate 490 each bind L-methionine; that span reads IGS. Residue tryptophan 567 participates in 5-methyltetrahydropteroyltri-L-glutamate binding. Aspartate 605 serves as a coordination point for L-homocysteine. Residue aspartate 605 coordinates L-methionine. Glutamate 611 is a 5-methyltetrahydropteroyltri-L-glutamate binding site. Residues histidine 647, cysteine 649, and glutamate 671 each coordinate Zn(2+). The active-site Proton donor is histidine 700. Cysteine 732 serves as a coordination point for Zn(2+).

It belongs to the vitamin-B12 independent methionine synthase family. It depends on Zn(2+) as a cofactor.

It catalyses the reaction 5-methyltetrahydropteroyltri-L-glutamate + L-homocysteine = tetrahydropteroyltri-L-glutamate + L-methionine. The protein operates within amino-acid biosynthesis; L-methionine biosynthesis via de novo pathway; L-methionine from L-homocysteine (MetE route): step 1/1. Functionally, catalyzes the transfer of a methyl group from 5-methyltetrahydrofolate to homocysteine resulting in methionine formation. The polypeptide is 5-methyltetrahydropteroyltriglutamate--homocysteine methyltransferase (Listeria monocytogenes serotype 4b (strain F2365)).